Here is a 108-residue protein sequence, read N- to C-terminus: UPF0145 protein LACR_1006 (108 aa).

The protein belongs to the UPF0145 family.

The sequence is that of UPF0145 protein LACR_1006 from Lactococcus lactis subsp. cremoris (strain SK11).